The following is a 353-amino-acid chain: uncharacterized protein (353 aa).

Zn(2+) contacts are provided by Cys-40, His-70, Cys-100, Cys-103, Cys-106, Cys-114, and Cys-158.

This sequence belongs to the zinc-containing alcohol dehydrogenase family. Zn(2+) is required as a cofactor.

This is an uncharacterized protein from Escherichia coli (strain K12).